The chain runs to 432 residues: Adenylosuccinate synthetase (432 aa).

Residues 11–17 (GDEGKGK) and 39–41 (GHT) contribute to the GTP site. Asp-12 functions as the Proton acceptor in the catalytic mechanism. Residues Asp-12 and Gly-39 each contribute to the Mg(2+) site. IMP-binding positions include 12 to 15 (DEGK), 37 to 40 (NAGH), Thr-134, Arg-148, Asn-230, Thr-245, and Arg-309. The active-site Proton donor is the His-40. 305 to 311 (VTTGRKR) is a substrate binding site. Residues Arg-311, 337 to 339 (KLD), and 419 to 421 (GTG) contribute to the GTP site.

It belongs to the adenylosuccinate synthetase family. Homodimer. The cofactor is Mg(2+).

Its subcellular location is the cytoplasm. The enzyme catalyses IMP + L-aspartate + GTP = N(6)-(1,2-dicarboxyethyl)-AMP + GDP + phosphate + 2 H(+). Its pathway is purine metabolism; AMP biosynthesis via de novo pathway; AMP from IMP: step 1/2. Functionally, plays an important role in the de novo pathway and in the salvage pathway of purine nucleotide biosynthesis. Catalyzes the first committed step in the biosynthesis of AMP from IMP. The chain is Adenylosuccinate synthetase from Vanderwaltozyma polyspora (strain ATCC 22028 / DSM 70294 / BCRC 21397 / CBS 2163 / NBRC 10782 / NRRL Y-8283 / UCD 57-17) (Kluyveromyces polysporus).